We begin with the raw amino-acid sequence, 142 residues long: Arginine decarboxylase proenzyme (142 aa).

The active-site Schiff-base intermediate with substrate; via pyruvic acid is the S81. Position 81 is a pyruvic acid (Ser); by autocatalysis (S81). The Proton acceptor; for processing activity role is filled by H86. C101 functions as the Proton donor; for catalytic activity in the catalytic mechanism.

It belongs to the prokaryotic AdoMetDC family. Type 1 subfamily. In terms of assembly, heterooctamer of four alpha and four beta chains arranged as a tetramer of alpha/beta heterodimers. The cofactor is pyruvate. Is synthesized initially as an inactive proenzyme. Formation of the active enzyme involves a self-maturation process in which the active site pyruvoyl group is generated from an internal serine residue via an autocatalytic post-translational modification. Two non-identical subunits are generated from the proenzyme in this reaction, and the pyruvate is formed at the N-terminus of the alpha chain, which is derived from the carboxyl end of the proenzyme. The post-translation cleavage follows an unusual pathway, termed non-hydrolytic serinolysis, in which the side chain hydroxyl group of the serine supplies its oxygen atom to form the C-terminus of the beta chain, while the remainder of the serine residue undergoes an oxidative deamination to produce ammonia and the pyruvoyl group blocking the N-terminus of the alpha chain.

It catalyses the reaction L-arginine + H(+) = agmatine + CO2. It participates in amine and polyamine biosynthesis; agmatine biosynthesis; agmatine from L-arginine: step 1/1. In terms of biological role, specifically catalyzes the decarboxylation of L-arginine to agmatine. Has no S-adenosylmethionine decarboxylase (AdoMetDC) activity. The polypeptide is Arginine decarboxylase proenzyme (Hyperthermus butylicus (strain DSM 5456 / JCM 9403 / PLM1-5)).